Reading from the N-terminus, the 964-residue chain is Glycine dehydrogenase (decarboxylating) (964 aa).

Positions 1–11 (MNSTLQNQTKT) are enriched in polar residues. Residues 1 to 21 (MNSTLQNQTKTNLEKVGTDPL) are disordered. K713 is modified (N6-(pyridoxal phosphate)lysine).

This sequence belongs to the GcvP family. The glycine cleavage system is composed of four proteins: P, T, L and H. The cofactor is pyridoxal 5'-phosphate.

The catalysed reaction is N(6)-[(R)-lipoyl]-L-lysyl-[glycine-cleavage complex H protein] + glycine + H(+) = N(6)-[(R)-S(8)-aminomethyldihydrolipoyl]-L-lysyl-[glycine-cleavage complex H protein] + CO2. In terms of biological role, the glycine cleavage system catalyzes the degradation of glycine. The P protein binds the alpha-amino group of glycine through its pyridoxal phosphate cofactor; CO(2) is released and the remaining methylamine moiety is then transferred to the lipoamide cofactor of the H protein. This Leptospira interrogans serogroup Icterohaemorrhagiae serovar Lai (strain 56601) protein is Glycine dehydrogenase (decarboxylating).